We begin with the raw amino-acid sequence, 732 residues long: Prolyl tripeptidyl peptidase (732 aa).

Positions 1 to 24 (MKKTIFQQLFLSVCALTVALPCSA) are cleaved as a signal peptide. Active-site charge relay system residues include serine 603, aspartate 678, and histidine 710.

The protein belongs to the peptidase S9B family. In terms of processing, the N-terminus is blocked.

The catalysed reaction is Hydrolysis of Xaa-Xaa-Pro-|-Yaa- releasing the N-terminal tripeptide of a peptide with Pro as the third residue (position P1) and where Yaa is not proline.. Its activity is regulated as follows. Strongly inhibited by diisopropyl fluorophosphate and Pefabloc. Weakly inhibited by 3,4-dichloroisocumarin. Not inhibited by phenylmethylsulfonyl fluoride, leupeptin, antipain or prolinal. Activated by iodoacetamide. Functionally, serine proteinase. Releases tripeptides from the free amino terminus of proteins. Has a requirement for Pro in the P1 position, but is inactivated by Pro in the P1' position. The polypeptide is Prolyl tripeptidyl peptidase (Porphyromonas gingivalis (strain ATCC BAA-308 / W83)).